An 85-amino-acid chain; its full sequence is Selenoprotein W (85 aa).

Positions 10 to 13 (CGAU) form a cross-link, cysteinyl-selenocysteine (Cys-Sec); redox-active. Sec-13 is a non-standard amino acid (selenocysteine).

The protein belongs to the SelWTH family. Selenoprotein W subfamily. In terms of tissue distribution, expressed ubiquitously with predominant expression in the pituitary, spinal cord, sciatic nerve, cerebral cortex, cerebral nuclei, thalamus, cerebellum, muscle, cartilage, trachea, gizzard and artery. Weakly expressed in pancreas, testis, ovary, kidney and veins.

It localises to the cytoplasm. Functionally, plays a role as a glutathione (GSH)-dependent antioxidant. May be involved in a redox-related process. May play a role in the myopathies of selenium deficiency. The protein is Selenoprotein W of Gallus gallus (Chicken).